The following is a 184-amino-acid chain: Cysteine proteinase inhibitor 3 (184 aa).

Residues 1–35 (MLRRRGFCCCSGAPAAAAAALLLLAVAAAAPRAAG) form the signal peptide. Positions 48 to 134 (GMLAAIRREQ…KAVVEFRHVG (87 aa)) constitute a Cystatin domain. The Secondary area of contact signature appears at 90 to 94 (QVVTG). Residues 138-165 (SQSATAADDNAGQDTADPTVASRNDLHN) form a disordered region.

This sequence belongs to the cystatin family. Phytocystatin subfamily.

The protein resides in the secreted. In terms of biological role, specific inhibitor of cysteine proteinases. Probably involved in the regulation of endogenous processes and in defense against pests and pathogens. The polypeptide is Cysteine proteinase inhibitor 3 (Oryza sativa subsp. japonica (Rice)).